The sequence spans 342 residues: L-threonine 3-dehydrogenase (342 aa).

Cys-38 serves as a coordination point for Zn(2+). Catalysis depends on charge relay system residues Thr-40 and His-43. Zn(2+)-binding residues include His-63, Glu-64, Cys-93, Cys-96, Cys-99, and Cys-107. NAD(+) is bound by residues Ile-175, Asp-195, Arg-200, 262–264 (LGI), and 286–287 (IY).

The protein belongs to the zinc-containing alcohol dehydrogenase family. As to quaternary structure, homotetramer. Zn(2+) is required as a cofactor.

Its subcellular location is the cytoplasm. It catalyses the reaction L-threonine + NAD(+) = (2S)-2-amino-3-oxobutanoate + NADH + H(+). It participates in amino-acid degradation; L-threonine degradation via oxydo-reductase pathway; glycine from L-threonine: step 1/2. In terms of biological role, catalyzes the NAD(+)-dependent oxidation of L-threonine to 2-amino-3-ketobutyrate. The protein is L-threonine 3-dehydrogenase of Burkholderia ambifaria (strain ATCC BAA-244 / DSM 16087 / CCUG 44356 / LMG 19182 / AMMD) (Burkholderia cepacia (strain AMMD)).